Consider the following 498-residue polypeptide: Glycylpeptide N-tetradecanoyltransferase 2 (498 aa).

The disordered stretch occupies residues 1–87 (MAEDSESAAS…QPPSKNSTIP (87 aa)). Residues 15-32 (ELDDQDTCGIDGDNEEET) are compositionally biased toward acidic residues. At S38 the chain carries Phosphoserine. The span at 46-57 (KKKKKKQKRKKE) shows a compositional bias: basic residues. Positions 61 to 72 (SGGTKSDSASDS) are enriched in polar residues. 8 residues coordinate tetradecanoyl-CoA: H117, W122, L250, V252, S258, R260, V261, and A262.

It belongs to the NMT family.

The protein resides in the cytoplasm. Its subcellular location is the membrane. It carries out the reaction N-terminal glycyl-[protein] + tetradecanoyl-CoA = N-tetradecanoylglycyl-[protein] + CoA + H(+). The enzyme catalyses N-terminal glycyl-L-lysyl-[protein] + tetradecanoyl-CoA = N-terminal glycyl-(N(6)-tetradecanoyl)-L-lysyl-[protein] + CoA + H(+). Its function is as follows. Adds a myristoyl group to the N-terminal glycine residue of certain cellular and viral proteins. Also able to mediate N-terminal lysine myristoylation of proteins: catalyzes myristoylation of ARF6 on both 'Gly-2' and 'Lys-3'. Lysine myristoylation is required to maintain ARF6 on membranes during the GTPase cycle. This is Glycylpeptide N-tetradecanoyltransferase 2 (NMT2) from Bos taurus (Bovine).